We begin with the raw amino-acid sequence, 444 residues long: tRNA-2-methylthio-N(6)-dimethylallyladenosine synthase (444 aa).

The MTTase N-terminal domain occupies 3–117 (RGLYIESYGC…LPELIMKVKR (115 aa)). C12, C48, C80, C155, C159, and C162 together coordinate [4Fe-4S] cluster. The region spanning 141 to 374 (ANGGVSAYVS…LLTKQQLQFN (234 aa)) is the Radical SAM core domain. A TRAM domain is found at 375-441 (KSMEGRVMDV…QNSLEGTVLS (67 aa)).

This sequence belongs to the methylthiotransferase family. MiaB subfamily. Monomer. It depends on [4Fe-4S] cluster as a cofactor.

It localises to the cytoplasm. The catalysed reaction is N(6)-dimethylallyladenosine(37) in tRNA + (sulfur carrier)-SH + AH2 + 2 S-adenosyl-L-methionine = 2-methylsulfanyl-N(6)-dimethylallyladenosine(37) in tRNA + (sulfur carrier)-H + 5'-deoxyadenosine + L-methionine + A + S-adenosyl-L-homocysteine + 2 H(+). Its function is as follows. Catalyzes the methylthiolation of N6-(dimethylallyl)adenosine (i(6)A), leading to the formation of 2-methylthio-N6-(dimethylallyl)adenosine (ms(2)i(6)A) at position 37 in tRNAs that read codons beginning with uridine. The sequence is that of tRNA-2-methylthio-N(6)-dimethylallyladenosine synthase from Anaplasma phagocytophilum (strain HZ).